The sequence spans 274 residues: 3-methyl-2-oxobutanoate hydroxymethyltransferase (274 aa).

Positions 50 and 89 each coordinate Mg(2+). 3-methyl-2-oxobutanoate contacts are provided by residues 50–51 (DS), Asp89, and Lys119. Residue Glu121 participates in Mg(2+) binding. Glu188 functions as the Proton acceptor in the catalytic mechanism.

It belongs to the PanB family. Homodecamer; pentamer of dimers. Mg(2+) is required as a cofactor.

It is found in the cytoplasm. It catalyses the reaction 3-methyl-2-oxobutanoate + (6R)-5,10-methylene-5,6,7,8-tetrahydrofolate + H2O = 2-dehydropantoate + (6S)-5,6,7,8-tetrahydrofolate. It functions in the pathway cofactor biosynthesis; (R)-pantothenate biosynthesis; (R)-pantoate from 3-methyl-2-oxobutanoate: step 1/2. Its function is as follows. Catalyzes the reversible reaction in which hydroxymethyl group from 5,10-methylenetetrahydrofolate is transferred onto alpha-ketoisovalerate to form ketopantoate. The protein is 3-methyl-2-oxobutanoate hydroxymethyltransferase of Methylorubrum populi (strain ATCC BAA-705 / NCIMB 13946 / BJ001) (Methylobacterium populi).